A 310-amino-acid polypeptide reads, in one-letter code: tRNA dimethylallyltransferase (310 aa).

Residue 14 to 21 (GPTASGKS) coordinates ATP. Residue 16–21 (TASGKS) coordinates substrate. 2 interaction with substrate tRNA regions span residues 39–42 (DSMQ) and 163–167 (QRIVR).

It belongs to the IPP transferase family. As to quaternary structure, monomer. Requires Mg(2+) as cofactor.

It catalyses the reaction adenosine(37) in tRNA + dimethylallyl diphosphate = N(6)-dimethylallyladenosine(37) in tRNA + diphosphate. Catalyzes the transfer of a dimethylallyl group onto the adenine at position 37 in tRNAs that read codons beginning with uridine, leading to the formation of N6-(dimethylallyl)adenosine (i(6)A). The chain is tRNA dimethylallyltransferase from Brucella ovis (strain ATCC 25840 / 63/290 / NCTC 10512).